The primary structure comprises 688 residues: GTPase IMAP family member 8 (688 aa).

A disordered region spans residues 22-44 (TSIGQGERPRASRGQESNFKQSQ). Positions 35-44 (GQESNFKQSQ) are enriched in polar residues. AIG1-type G domains are found at residues 46–246 (TSTL…TENS), 281–471 (TPEL…VIRE), and 472–681 (KELL…SAVG). A G1 region spans residues 55 to 62 (GKQGAGKS). GTP-binding positions include 55-63 (GKQGAGKSA) and serine 76. Residues 82-86 (MVTKR) form a G2 region. The G3 stretch occupies residues 103–106 (DTPD). Positions 171-174 (TRED) are G4. GTP-binding positions include 172-174 (RED) and asparagine 208. Residues 207–209 (NNK) are G5.

It belongs to the TRAFAC class TrmE-Era-EngA-EngB-Septin-like GTPase superfamily. AIG1/Toc34/Toc159-like paraseptin GTPase family. IAN subfamily. As to expression, spleen, thymus and T-cells. Greatly reduced in T-cells from lymphopenic rats.

Its subcellular location is the endoplasmic reticulum. The protein resides in the golgi apparatus. It localises to the mitochondrion. The protein localises to the cytoplasm. It is found in the cytosol. Its function is as follows. Exerts an anti-apoptotic effect in the immune system and is involved in responses to infections. The protein is GTPase IMAP family member 8 (Gimap8) of Rattus norvegicus (Rat).